Here is a 145-residue protein sequence, read N- to C-terminus: Large ribosomal subunit protein uL16 (145 aa).

The protein belongs to the universal ribosomal protein uL16 family. In terms of assembly, part of the 50S ribosomal subunit.

Binds 23S rRNA and is also seen to make contacts with the A and possibly P site tRNAs. The chain is Large ribosomal subunit protein uL16 from Herpetosiphon aurantiacus (strain ATCC 23779 / DSM 785 / 114-95).